A 389-amino-acid polypeptide reads, in one-letter code: Endonuclease 8-like 1 (389 aa).

Pro2 acts as the Schiff-base intermediate with DNA in catalysis. The active-site Proton donor is the Glu3. The active-site Proton donor; for beta-elimination activity is the Lys54. Residue Asn176 participates in DNA binding. The disordered stretch occupies residues 278–389 (TIWFQGDPGP…PREAGESSAS (112 aa)). Positions 322–333 (SRMRRARKHPPK) are enriched in basic residues. Residues 336–351 (AQQSEGAGLQQNQETP) are compositionally biased toward polar residues. Over residues 357 to 373 (GKRRGQRASTGHRRRPK) the composition is skewed to basic residues. Residues 374 to 389 (TIPDTRPREAGESSAS) are compositionally biased toward basic and acidic residues.

Belongs to the FPG family. Detected in heart, spleen and lung.

Its subcellular location is the cytoplasm. The protein resides in the cytoskeleton. The protein localises to the microtubule organizing center. It is found in the centrosome. It localises to the nucleus. Its subcellular location is the chromosome. It carries out the reaction 2'-deoxyribonucleotide-(2'-deoxyribose 5'-phosphate)-2'-deoxyribonucleotide-DNA = a 3'-end 2'-deoxyribonucleotide-(2,3-dehydro-2,3-deoxyribose 5'-phosphate)-DNA + a 5'-end 5'-phospho-2'-deoxyribonucleoside-DNA + H(+). Involved in base excision repair of DNA damaged by oxidation or by mutagenic agents. Acts as a DNA glycosylase that recognizes and removes damaged bases. Has a preference for oxidized pyrimidines, such as thymine glycol, formamidopyrimidine (Fapy) and 5-hydroxyuracil. Has marginal activity towards 8-oxoguanine. Has AP (apurinic/apyrimidinic) lyase activity and introduces nicks in the DNA strand. Cleaves the DNA backbone by beta-delta elimination to generate a single-strand break at the site of the removed base with both 3'- and 5'-phosphates. Has DNA glycosylase/lyase activity towards mismatched uracil and thymine, in particular in U:C and T:C mismatches. Specifically binds 5-hydroxymethylcytosine (5hmC), suggesting that it acts as a specific reader of 5hmC. This Mus musculus (Mouse) protein is Endonuclease 8-like 1 (Neil1).